Reading from the N-terminus, the 322-residue chain is GDSL esterase/lipase At2g04020 (322 aa).

A signal peptide spans 1-26 (MGLPSSLESYLLLILLSFLNVSTIYS). Ser50 acts as the Nucleophile in catalysis. N-linked (GlcNAc...) asparagine glycosylation is present at Asn260. Catalysis depends on residues Asp296 and His299.

This sequence belongs to the 'GDSL' lipolytic enzyme family.

The protein resides in the secreted. The polypeptide is GDSL esterase/lipase At2g04020 (Arabidopsis thaliana (Mouse-ear cress)).